Reading from the N-terminus, the 937-residue chain is Chromatin assembly factor 1 subunit A (937 aa).

The segment at 21 to 69 (RLPFKRLNPVPKEKHDAEAEGKKGKCSKSGLGQSKDSSTDTLHASTDNM) is disordered. Residues 31–43 (PKEKHDAEAEGKK) show a composition bias toward basic and acidic residues. Residues 59–69 (TDTLHASTDNM) are compositionally biased toward polar residues. The PxVxL motif signature appears at 213 to 226 (FEGKMPVVLLEDIM). Disordered regions lie at residues 250-386 (SHEG…EKRK), 574-614 (VDSD…IPHG), 753-778 (GDTS…VPSK), 831-851 (SGKE…TPVS), and 910-937 (TVTE…SNTV). Low complexity predominate over residues 255 to 269 (SVLTNSSLSSLSVSS). Residues 301–386 (SSAEKEKLRL…KLRVKEEKRK (86 aa)) are compositionally biased toward basic and acidic residues. Composition is skewed to acidic residues over residues 574 to 586 (VDSD…EEPG) and 594 to 608 (GDDE…DDDG). Positions 756-766 (SPVSPNTSRPQ) are enriched in polar residues.

Belongs to the CHAF1A family. As to quaternary structure, subunit of the CAF-1 complex that contains RBBP4, CHAF1B and CHAF1A. Interacts with CHAF1B, PCNA and RBBP4.

The protein resides in the nucleus. Its function is as follows. Acts as a component of the histone chaperone complex chromatin assembly factor 1 (CAF-1), which assembles histone octamers onto DNA during replication and repair. CAF-1 performs the first step of the nucleosome assembly process, bringing newly synthesized histones H3 and H4 to replicating DNA; histones H2A/H2B can bind to this chromatin precursor subsequent to DNA replication to complete the histone octamer. The polypeptide is Chromatin assembly factor 1 subunit A (CHAF1A) (Gallus gallus (Chicken)).